Reading from the N-terminus, the 1057-residue chain is Hemophilin receptor (1057 aa).

In terms of domain architecture, TBDR plug spans 168-285 (KVYDANRSSV…VGGAVVVKTL (118 aa)). The TBDR beta-barrel domain occupies 296–1057 (SFGAELKVEG…TMKISWTTKF (762 aa)).

Belongs to the TonB-dependent receptor family.

It localises to the cell outer membrane. In terms of biological role, part of a high affinity heme acquisition system. Functions as a gateway for heme entry into the bacterial cell, enabling growth on hemoprotein sources. Can acquire heme directly from hemoprotein reservoirs, however, HphA likely enhances the efficiency of this process by delivering heme to HphR. Is essential for virulence, bacterial dissemination and growth in the blood. This is Hemophilin receptor from Acinetobacter baumannii.